We begin with the raw amino-acid sequence, 156 residues long: SsrA-binding protein (156 aa).

Residues Lys135–Arg150 are compositionally biased toward basic and acidic residues. Residues Lys135–Thr156 are disordered.

Belongs to the SmpB family.

It is found in the cytoplasm. Required for rescue of stalled ribosomes mediated by trans-translation. Binds to transfer-messenger RNA (tmRNA), required for stable association of tmRNA with ribosomes. tmRNA and SmpB together mimic tRNA shape, replacing the anticodon stem-loop with SmpB. tmRNA is encoded by the ssrA gene; the 2 termini fold to resemble tRNA(Ala) and it encodes a 'tag peptide', a short internal open reading frame. During trans-translation Ala-aminoacylated tmRNA acts like a tRNA, entering the A-site of stalled ribosomes, displacing the stalled mRNA. The ribosome then switches to translate the ORF on the tmRNA; the nascent peptide is terminated with the 'tag peptide' encoded by the tmRNA and targeted for degradation. The ribosome is freed to recommence translation, which seems to be the essential function of trans-translation. This Legionella pneumophila (strain Corby) protein is SsrA-binding protein.